Consider the following 444-residue polypeptide: Phosphoglucosamine mutase (444 aa).

Catalysis depends on Ser104, which acts as the Phosphoserine intermediate. Residues Ser104, Asp243, Asp245, and Asp247 each contribute to the Mg(2+) site. Phosphoserine is present on Ser104.

Belongs to the phosphohexose mutase family. Mg(2+) is required as a cofactor. Activated by phosphorylation.

The catalysed reaction is alpha-D-glucosamine 1-phosphate = D-glucosamine 6-phosphate. In terms of biological role, catalyzes the conversion of glucosamine-6-phosphate to glucosamine-1-phosphate. In Neisseria meningitidis serogroup C / serotype 2a (strain ATCC 700532 / DSM 15464 / FAM18), this protein is Phosphoglucosamine mutase.